The following is a 345-amino-acid chain: Anthranilate phosphoribosyltransferase (345 aa).

Residues G86, 89–90 (GD), T94, 96–99 (NIST), 114–122 (KHGNRNLSS), and A126 each bind 5-phospho-alpha-D-ribose 1-diphosphate. Anthranilate is bound at residue G86. S98 lines the Mg(2+) pocket. Residue N117 coordinates anthranilate. R172 lines the anthranilate pocket. Mg(2+) is bound by residues D231 and E232.

Belongs to the anthranilate phosphoribosyltransferase family. Homodimer. Mg(2+) serves as cofactor.

It carries out the reaction N-(5-phospho-beta-D-ribosyl)anthranilate + diphosphate = 5-phospho-alpha-D-ribose 1-diphosphate + anthranilate. It functions in the pathway amino-acid biosynthesis; L-tryptophan biosynthesis; L-tryptophan from chorismate: step 2/5. In terms of biological role, catalyzes the transfer of the phosphoribosyl group of 5-phosphorylribose-1-pyrophosphate (PRPP) to anthranilate to yield N-(5'-phosphoribosyl)-anthranilate (PRA). The sequence is that of Anthranilate phosphoribosyltransferase from Jannaschia sp. (strain CCS1).